Reading from the N-terminus, the 159-residue chain is Molybdopterin synthase catalytic subunit (159 aa).

Substrate is bound by residues 41–43 (LCR), 105–106 (HR), Lys121, and 128–130 (KKE). The interval 130–159 (EHRTDGSEGGWVEAKETDTQAAKRWKSSSE) is disordered.

The protein belongs to the MoaE family. Heterotetramer of 2 MoaD subunits and 2 MoaE subunits. Also stable as homodimer. The enzyme changes between these two forms during catalysis.

The enzyme catalyses 2 [molybdopterin-synthase sulfur-carrier protein]-C-terminal-Gly-aminoethanethioate + cyclic pyranopterin phosphate + H2O = molybdopterin + 2 [molybdopterin-synthase sulfur-carrier protein]-C-terminal Gly-Gly + 2 H(+). The protein operates within cofactor biosynthesis; molybdopterin biosynthesis. Functionally, converts molybdopterin precursor Z into molybdopterin. This requires the incorporation of two sulfur atoms into precursor Z to generate a dithiolene group. The sulfur is provided by MoaD. This Mesorhizobium japonicum (strain LMG 29417 / CECT 9101 / MAFF 303099) (Mesorhizobium loti (strain MAFF 303099)) protein is Molybdopterin synthase catalytic subunit (moaE).